The chain runs to 408 residues: Na(+)-translocating NADH-quinone reductase subunit F (408 aa).

A helical transmembrane segment spans residues 6–26 (IILGVVMFTAIVLALVAIILA). One can recognise a 2Fe-2S ferredoxin-type domain in the interval 35–127 (GDVTIRINGE…DMDVEVPEEV (93 aa)). Positions 70, 76, 79, and 111 each coordinate [2Fe-2S] cluster. Positions 130–270 (VKAWECTVES…YGPFGEFFAK (141 aa)) constitute an FAD-binding FR-type domain.

This sequence belongs to the NqrF family. In terms of assembly, composed of six subunits; NqrA, NqrB, NqrC, NqrD, NqrE and NqrF. The cofactor is [2Fe-2S] cluster. It depends on FAD as a cofactor.

The protein localises to the cell inner membrane. It carries out the reaction a ubiquinone + n Na(+)(in) + NADH + H(+) = a ubiquinol + n Na(+)(out) + NAD(+). Functionally, NQR complex catalyzes the reduction of ubiquinone-1 to ubiquinol by two successive reactions, coupled with the transport of Na(+) ions from the cytoplasm to the periplasm. The first step is catalyzed by NqrF, which accepts electrons from NADH and reduces ubiquinone-1 to ubisemiquinone by a one-electron transfer pathway. The chain is Na(+)-translocating NADH-quinone reductase subunit F from Marinomonas sp. (strain MWYL1).